The primary structure comprises 374 residues: Succinyl-diaminopimelate desuccinylase (374 aa).

H66 serves as a coordination point for Zn(2+). D68 is an active-site residue. D99 is a binding site for Zn(2+). Residue E133 is the Proton acceptor of the active site. Zn(2+)-binding residues include E134, E162, and H348.

This sequence belongs to the peptidase M20A family. DapE subfamily. As to quaternary structure, homodimer. Zn(2+) is required as a cofactor. Requires Co(2+) as cofactor.

It catalyses the reaction N-succinyl-(2S,6S)-2,6-diaminopimelate + H2O = (2S,6S)-2,6-diaminopimelate + succinate. It functions in the pathway amino-acid biosynthesis; L-lysine biosynthesis via DAP pathway; LL-2,6-diaminopimelate from (S)-tetrahydrodipicolinate (succinylase route): step 3/3. In terms of biological role, catalyzes the hydrolysis of N-succinyl-L,L-diaminopimelic acid (SDAP), forming succinate and LL-2,6-diaminopimelate (DAP), an intermediate involved in the bacterial biosynthesis of lysine and meso-diaminopimelic acid, an essential component of bacterial cell walls. This Coxiella burnetii (strain CbuK_Q154) (Coxiella burnetii (strain Q154)) protein is Succinyl-diaminopimelate desuccinylase.